The primary structure comprises 1684 residues: Protein Wiz (1684 aa).

The segment at 1–77 (MEGLLAGGLA…PGLSEALPRA (77 aa)) is disordered. Residues 13–24 (DHPRGPAPREDI) are compositionally biased toward basic and acidic residues. C2H2-type zinc fingers lie at residues 308 to 330 (FPCI…MSQH), 345 to 367 (LACS…WQLH), 454 to 477 (NTCV…RLVH), 734 to 756 (RKCP…VRGH), and 802 to 824 (MRCD…ARAH). Residues 854–876 (LPPSPLGREPGGPPRSFLTSRRP) form a disordered region. The C2H2-type 6 zinc-finger motif lies at 903–925 (TTCEVCGACFETRKGLSSHARSH). Residues K916, K972, K988, K1000, and K1021 each participate in a glycyl lysine isopeptide (Lys-Gly) (interchain with G-Cter in SUMO2) cross-link. The tract at residues 1005-1072 (FSAKGLTHPS…PLNLTSGPEP (68 aa)) is disordered. S1029 carries the post-translational modification Phosphoserine. T1031 carries the post-translational modification Phosphothreonine. Glycyl lysine isopeptide (Lys-Gly) (interchain with G-Cter in SUMO2) cross-links involve residues K1033 and K1038. Residues S1039 and S1045 each carry the phosphoserine modification. Residues 1040-1057 (PQLSLSPRPTSPKAQWPQ) are compositionally biased toward polar residues. T1049 is subject to Phosphothreonine. S1050 and S1058 each carry phosphoserine. The segment at 1063-1067 (PLNLT) is interaction with CTBP1 and CTBP2 1. The C2H2-type 7 zinc finger occupies 1076–1098 (IRCEFCGEFFENRKGLSSHARSH). K1089 participates in a covalent cross-link: Glycyl lysine isopeptide (Lys-Gly) (interchain with G-Cter in SUMO2). A phosphoserine mark is found at S1112 and S1139. The disordered stretch occupies residues 1127-1208 (SRPGGHLHPP…GLATPSLPKK (82 aa)). Residues K1141 and K1145 each participate in a glycyl lysine isopeptide (Lys-Gly) (interchain with G-Cter in SUMO2) cross-link. Phosphoserine is present on residues S1155, S1160, and S1167. Residues K1171 and K1172 each participate in a glycyl lysine isopeptide (Lys-Gly) (interchain with G-Cter in SUMO2) cross-link. A phosphoserine mark is found at S1179 and S1184. K1195 carries the post-translational modification N6,N6,N6-trimethyllysine; by EHMT2; alternate. At K1195 the chain carries N6,N6-dimethyllysine; by EHMT2; alternate. Residue K1210 forms a Glycyl lysine isopeptide (Lys-Gly) (interchain with G-Cter in SUMO2) linkage. The tract at residues 1247–1251 (PLNLS) is interaction with CTBP1 and CTBP2 2. A C2H2-type 8 zinc finger spans residues 1260-1282 (IRCEFCGEFFENRKGLSSHARSH). A Glycyl lysine isopeptide (Lys-Gly) (interchain with G-Cter in SUMO2) cross-link involves residue K1273. A Phosphoserine modification is found at S1296. Residue K1315 forms a Glycyl lysine isopeptide (Lys-Gly) (interchain with G-Cter in SUMO2) linkage. Residues 1320–1384 (AGDLAPALTE…SKPSAASYLG (65 aa)) form a disordered region. Residues 1335–1351 (AAPGALHSPLPLSPLAS) are compositionally biased toward low complexity. Residues S1342 and S1347 each carry the phosphoserine modification. Glycyl lysine isopeptide (Lys-Gly) (interchain with G-Cter in SUMO2) cross-links involve residues K1376, K1389, K1403, K1405, and K1415. A C2H2-type 9 zinc finger spans residues 1430-1452 (ACCELCGLYFENRKALASHARAH). Glycyl lysine isopeptide (Lys-Gly) (interchain with G-Cter in SUMO2) cross-links involve residues K1481, K1497, and K1510. Disordered regions lie at residues 1496-1587 (TKKF…GEEV) and 1592-1611 (QKLE…PSLV). Phosphoserine is present on S1550. K1556 participates in a covalent cross-link: Glycyl lysine isopeptide (Lys-Gly) (interchain with G-Cter in SUMO1); alternate. A Glycyl lysine isopeptide (Lys-Gly) (interchain with G-Cter in SUMO2); alternate cross-link involves residue K1556. Over residues 1556–1574 (KSEEHQRQNINKFERRQAR) the composition is skewed to basic and acidic residues. Residues K1567 and K1593 each participate in a glycyl lysine isopeptide (Lys-Gly) (interchain with G-Cter in SUMO2) cross-link. The segment covering 1599–1611 (QPPPRVRPVPSLV) has biased composition (pro residues). The segment at 1629-1655 (LKCRFCEVEFQGPLSIQEEWVRHLQRH) adopts a C2H2-type 10 zinc-finger fold. Residues 1662-1684 (SKADPPPEEPQAPQAQTAAVEAP) form a disordered region. K1663 participates in a covalent cross-link: Glycyl lysine isopeptide (Lys-Gly) (interchain with G-Cter in SUMO2). Residues 1672 to 1684 (QAPQAQTAAVEAP) are compositionally biased toward low complexity.

Belongs to the krueppel C2H2-type zinc-finger protein family. In terms of assembly, part of a complex containing at least CDYL, REST, WIZ, SETB1, EHMT1 and EHMT2. Interacts with EHMT1, EHMT2, CTBP1 and CTBP2. According to PubMed:9795207, isoform L and isoform S are brain-specific. According to PubMed:16702210, isoform S is ubiquitously expressed.

The protein localises to the nucleus. In terms of biological role, may link EHMT1 and EHMT2 histone methyltransferases to the CTBP corepressor machinery. May be involved in EHMT1-EHMT2 heterodimer formation and stabilization. In Mus musculus (Mouse), this protein is Protein Wiz (Wiz).